A 285-amino-acid chain; its full sequence is Purine biosynthesis transcriptional repressor PurR (285 aa).

The tract at residues 1–73 (MKFRRSGRLV…GAAGGVKYIP (73 aa)) is DNA binding domain. An effector binding domain region spans residues 74–285 (KMKQAEAEEF…NLLKNGETES (212 aa)). Position 102 (Tyr102) interacts with guanosine 3',5'-bis(diphosphate). Residues Ala138, Thr139, Lys140, and Arg160 each contribute to the 5-phospho-alpha-D-ribose 1-diphosphate site. 2 residues coordinate guanosine 3',5'-bis(diphosphate): Gly178 and Ser179. 5-phospho-alpha-D-ribose 1-diphosphate-binding residues include Asp203, Asp204, Phe205, Lys207, and Ala208. Lys207 contributes to the guanosine 3',5'-bis(diphosphate) binding site. Guanosine 3',5'-bis(diphosphate) contacts are provided by Gly209, Gly210, and Thr211. Position 211 (Thr211) interacts with 5-phospho-alpha-D-ribose 1-diphosphate.

It belongs to the purine/pyrimidine phosphoribosyltransferase family. PurR subfamily. In terms of assembly, homodimer.

Its activity is regulated as follows. The binding of PurR to DNA, and therefore the repressor activity, is influenced by interaction with the effector molecules 5-phosphoribosyl 1-pyrophosphate (PRPP) and (p)ppGpp. PRPP binds to PurR and reduces affinity of PurR for DNA, which inhibits the repressor activity and induces transcription of the target genes. On the contrary, (p)ppGpp enhances binding of PurR to DNA and repression of the transcription. PRPP and (p)ppGpp compete for PurR binding and allosteric control of transcription. ppGpp maintains PurR-DNA interaction and prevents PRPP from de-repressing PurR regulation during conditions that lead to (p)ppGpp induction, such as upon amino acid starvation. In terms of biological role, DNA-binding transcriptional repressor that controls the expression of a number of genes involved in the synthesis, metabolism and transport of purines. In response to a signal of excess adenine, represses the transcription of the pur operon, which encodes enzymes of the purine biosynthetic pathway. It also represses the expression of the purA and purR genes. In addition, controls the expression of several other genes or operons, which encode enzymes or transporters playing a role in purine nucleotide metabolism. Acts by binding directly to specific DNA sequences, named PurBoxes, in the upstream control regions of affected genes. Two PurBoxes are required for high-affinity PurR binding. Also responds to amino acid starvation via (p)ppGpp, which strongly increases PurR activity and repression of purine nucleotide biosynthesis genes. The protein is Purine biosynthesis transcriptional repressor PurR of Bacillus subtilis (strain 168).